A 596-amino-acid polypeptide reads, in one-letter code: Elongation factor 4 (596 aa).

A tr-type G domain is found at 2–184; it reads KNIRNFAIIA…SIVKYIPPPE (183 aa). Residues 14-19 and 131-134 contribute to the GTP site; these read DHGKST and NKID.

It belongs to the TRAFAC class translation factor GTPase superfamily. Classic translation factor GTPase family. LepA subfamily.

The protein localises to the cell inner membrane. It catalyses the reaction GTP + H2O = GDP + phosphate + H(+). In terms of biological role, required for accurate and efficient protein synthesis under certain stress conditions. May act as a fidelity factor of the translation reaction, by catalyzing a one-codon backward translocation of tRNAs on improperly translocated ribosomes. Back-translocation proceeds from a post-translocation (POST) complex to a pre-translocation (PRE) complex, thus giving elongation factor G a second chance to translocate the tRNAs correctly. Binds to ribosomes in a GTP-dependent manner. This is Elongation factor 4 from Neorickettsia sennetsu (strain ATCC VR-367 / Miyayama) (Ehrlichia sennetsu).